We begin with the raw amino-acid sequence, 1097 residues long: Nitric oxide synthase-like protein (1097 aa).

Position 77 (cysteine 77) interacts with heme b. Residues glutamine 140, tryptophan 249, tyrosine 250, glutamate 254, and asparagine 259 each coordinate L-arginine. (6R)-L-erythro-5,6,7,8-tetrahydrobiopterin-binding residues include tryptophan 340 and phenylalanine 353. Tyrosine 368 provides a ligand contact to heme b. The segment at 387-410 (KRPINRKFHFKQIARAVKFTSKLF) is calmodulin-binding. The Flavodoxin-like domain maps to 420-615 (ATVLYATETG…AFRKWASSVF (196 aa)). Residues 426–430 (TETGK) and 561–592 (VFAL…ERIH) contribute to the FMN site. The 246-residue stretch at 669-914 (KQFVSCTVKA…IRSAPNFHLP (246 aa)) folds into the FAD-binding FR-type domain. Residues 704 to 715 (YNPGDHVGIIAC) and 847 to 857 (LQPRFYSISSS) contribute to the FAD site. Residues 922 to 940 (ILIG…WHHR) and 1019 to 1034 (GAHF…AEDV) contribute to the NADP(+) site.

Belongs to the NOS family. It depends on heme b as a cofactor. FAD is required as a cofactor. The cofactor is FMN.

It catalyses the reaction 2 L-arginine + 3 NADPH + 4 O2 + H(+) = 2 L-citrulline + 2 nitric oxide + 3 NADP(+) + 4 H2O. In terms of biological role, produces nitric oxide (NO) which is a messenger molecule with diverse functions throughout the body. The chain is Nitric oxide synthase-like protein from Bombyx mori (Silk moth).